We begin with the raw amino-acid sequence, 1010 residues long: Pre-mRNA-splicing factor cwc22 (1010 aa).

The span at 1-10 (MASADMSPSR) shows a compositional bias: polar residues. The interval 1–166 (MASADMSPSR…RTPTPPPVAV (166 aa)) is disordered. A compositionally biased stretch (low complexity) spans 18–28 (RSPSPRTQSPS). 2 stretches are compositionally biased toward basic and acidic residues: residues 29-39 (PRDEDGSRSPG) and 65-78 (PRRD…DQPH). The span at 84-109 (RSPTPRSQSPSRRSVRSPSPRQGSPA) shows a compositional bias: low complexity. Basic and acidic residues predominate over residues 142–158 (RHRDAGGDYRPVRKERT). In terms of domain architecture, MIF4G spans 222–405 (KKSVNGLVNK…EVLFQVRKDK (184 aa)). The disordered stretch occupies residues 466–498 (GEASDDDEDDDDDDESESGSESEDEEQKALEIK). A compositionally biased stretch (acidic residues) spans 468–491 (ASDDDEDDDDDDESESGSESEDEE). An MI domain is found at 507-623 (NLRRTIYLSI…GWHVFSVIHL (117 aa)). The disordered stretch occupies residues 708–1010 (LPAPPADSDS…SPVAKRGRVD (303 aa)). Residues 718-732 (ESVSSYSSYSSYSSR) show a composition bias toward low complexity. Basic residues predominate over residues 753–775 (PPRRGRGRSYSRTPSRSRSRSRS). Residues 776-787 (YSRSVSKSVSRS) are compositionally biased toward low complexity. Composition is skewed to basic residues over residues 834-846 (RRGR…RSRS) and 899-910 (RLRRGSYSRSRS). Over residues 911–935 (RSPIPIRGNGPAGRDTGRAGPAPAR) the composition is skewed to low complexity. The segment covering 936–948 (GGRRNRSYSRSRT) has biased composition (basic residues). Low complexity predominate over residues 961–973 (SRRVVSRSPSPVV). Residues 976–1010 (NKRRRSYSSSRSRSRSSSRSRYRSRSPVAKRGRVD) show a composition bias toward basic residues.

Belongs to the CWC22 family. As to quaternary structure, associated with the spliceosome.

The protein localises to the cytoplasm. The protein resides in the nucleus. In terms of biological role, involved in pre-mRNA splicing. The chain is Pre-mRNA-splicing factor cwc22 (msp-1) from Neurospora crassa (strain ATCC 24698 / 74-OR23-1A / CBS 708.71 / DSM 1257 / FGSC 987).